An 871-amino-acid chain; its full sequence is Probable receptor-like protein kinase At2g21480 (871 aa).

Positions 1–39 are cleaved as a signal peptide; sequence MEIRKKPNIPMCLVLDSSSRPFMTLLFTILLFLTGLASA. Residues 40–439 are Extracellular-facing; it reads VGAVGGSPTA…GQRASMGKQG (400 aa). N-linked (GlcNAc...) asparagine glycans are attached at residues asparagine 169, asparagine 182, asparagine 253, asparagine 316, and asparagine 381. The chain crosses the membrane as a helical span at residues 440–460; that stretch reads MVATAGFVMMFGAFVGLGAMV. At 461 to 871 the chain is on the cytoplasmic side; the sequence is YKWKKRPQDW…FTQFASLNGR (411 aa). Residues 525–797 enclose the Protein kinase domain; sequence FDASEIIGVG…GDVLWNLEYA (273 aa). Residues 531–539 and lysine 553 contribute to the ATP site; that span reads IGVGGFGNV. Catalysis depends on aspartate 649, which acts as the Proton acceptor. A disordered region spans residues 808 to 871; sequence KAEAEEVETP…FTQFASLNGR (64 aa). The span at 817 to 839 shows a compositional bias: low complexity; it reads PKPVAVPAAAPTSPAATTAAASE. Polar residues predominate over residues 854-871; it reads DQHSGTTMFTQFASLNGR.

It belongs to the protein kinase superfamily. Ser/Thr protein kinase family.

It localises to the membrane. The sequence is that of Probable receptor-like protein kinase At2g21480 from Arabidopsis thaliana (Mouse-ear cress).